A 382-amino-acid chain; its full sequence is V-type proton ATPase subunit C 1 (382 aa).

Residue Thr-2 is modified to N-acetylthreonine.

It belongs to the V-ATPase C subunit family. In terms of assembly, V-ATPase is a heteromultimeric enzyme made up of two complexes: the ATP-hydrolytic V1 complex and the proton translocation V0 complex. The V1 complex consists of three catalytic AB heterodimers that form a heterohexamer, three peripheral stalks each consisting of EG heterodimers, one central rotor including subunits D and F, and the regulatory subunits C and H. The proton translocation complex V0 consists of the proton transport subunit a, a ring of proteolipid subunits c9c'', rotary subunit d, subunits e and f, and the accessory subunits ATP6AP1/Ac45 and ATP6AP2/PRR. Expressed in brain (at protein level).

The protein resides in the cytoplasmic vesicle. It is found in the secretory vesicle. The protein localises to the synaptic vesicle membrane. It localises to the clathrin-coated vesicle membrane. Its function is as follows. Subunit of the V1 complex of vacuolar(H+)-ATPase (V-ATPase), a multisubunit enzyme composed of a peripheral complex (V1) that hydrolyzes ATP and a membrane integral complex (V0) that translocates protons. V-ATPase is responsible for acidifying and maintaining the pH of intracellular compartments and in some cell types, is targeted to the plasma membrane, where it is responsible for acidifying the extracellular environment. Subunit C is necessary for the assembly of the catalytic sector of the enzyme and is likely to have a specific function in its catalytic activity. The chain is V-type proton ATPase subunit C 1 (Atp6v1c1) from Rattus norvegicus (Rat).